Consider the following 607-residue polypeptide: Glutamyl-tRNA(Gln) amidotransferase subunit E (607 aa).

Belongs to the GatB/GatE family. GatE subfamily. As to quaternary structure, heterodimer of GatD and GatE.

The catalysed reaction is L-glutamyl-tRNA(Gln) + L-glutamine + ATP + H2O = L-glutaminyl-tRNA(Gln) + L-glutamate + ADP + phosphate + H(+). Its function is as follows. Allows the formation of correctly charged Gln-tRNA(Gln) through the transamidation of misacylated Glu-tRNA(Gln) in organisms which lack glutaminyl-tRNA synthetase. The reaction takes place in the presence of glutamine and ATP through an activated gamma-phospho-Glu-tRNA(Gln). The GatDE system is specific for glutamate and does not act on aspartate. The chain is Glutamyl-tRNA(Gln) amidotransferase subunit E from Pyrobaculum islandicum (strain DSM 4184 / JCM 9189 / GEO3).